A 175-amino-acid polypeptide reads, in one-letter code: Diacylglycerol kinase (175 aa).

2 helical membrane passes run 55 to 75 (VAPN…YAFA) and 96 to 116 (LLHL…LVMI). The active-site Proton acceptor is glutamate 118. A divalent metal cation is bound at residue glutamate 125. Residues 151-171 (VLLAAIAAVIVGGCLLLPPLL) traverse the membrane as a helical segment.

This sequence belongs to the bacterial diacylglycerol kinase family. Mg(2+) serves as cofactor.

The protein resides in the cell membrane. It catalyses the reaction a 1,2-diacyl-sn-glycerol + ATP = a 1,2-diacyl-sn-glycero-3-phosphate + ADP + H(+). Its function is as follows. Catalyzes the ATP-dependent phosphorylation of sn-l,2-diacylglycerol (DAG) to phosphatidic acid. In Synechocystis sp. (strain ATCC 27184 / PCC 6803 / Kazusa), this protein is Diacylglycerol kinase (dgkA).